The following is a 135-amino-acid chain: C-type lectin APL (135 aa).

4 disulfides stabilise this stretch: Cys-3–Cys-14, Cys-31–Cys-131, Cys-38–Cys-133, and Cys-106–Cys-123. Residues 10–132 form the C-type lectin domain; that stretch reads MNGLCYKIFD…CESKNAFLCQ (123 aa). 5 residues coordinate Ca(2+): Gln-96, Asp-98, Glu-104, Asn-119, and Asp-120. The short motif at 96–98 is the Galactose-binding element; the sequence is QPD.

It belongs to the true venom lectin family. As to quaternary structure, homodimer; disulfide-linked. In terms of tissue distribution, expressed by the venom gland.

The protein localises to the secreted. Functionally, beta-galactoside lectin that agglutinates rabbit and human erythrocytes in a calcium-dependent fashion (MHC is 0.21 ug/ml on rabbit erythrocytes). Galactose (15 mM), lactose (20 mM), rhamnose (20 mM) and EGTA strongly inhibit this activity. The sequence is that of C-type lectin APL from Agkistrodon piscivorus piscivorus (Eastern cottonmouth).